We begin with the raw amino-acid sequence, 298 residues long: Glutamyl-Q tRNA(Asp) synthetase (298 aa).

Residues Arg-9–Ser-13 and Glu-45 each bind L-glutamate. Positions Pro-12–Ser-22 match the 'HIGH' region motif. Cys-101, Cys-103, Tyr-115, and Cys-119 together coordinate Zn(2+). L-glutamate-binding residues include Tyr-172 and Arg-190. The 'KMSKS' region motif lies at Lys-228–Gln-232. Lys-231 is a binding site for ATP.

It belongs to the class-I aminoacyl-tRNA synthetase family. GluQ subfamily. Zn(2+) serves as cofactor.

Functionally, catalyzes the tRNA-independent activation of glutamate in presence of ATP and the subsequent transfer of glutamate onto a tRNA(Asp). Glutamate is transferred on the 2-amino-5-(4,5-dihydroxy-2-cyclopenten-1-yl) moiety of the queuosine in the wobble position of the QUC anticodon. The sequence is that of Glutamyl-Q tRNA(Asp) synthetase from Salmonella paratyphi A (strain ATCC 9150 / SARB42).